Reading from the N-terminus, the 112-residue chain is Small ribosomal subunit protein bS6 (112 aa).

The protein belongs to the bacterial ribosomal protein bS6 family.

Its function is as follows. Binds together with bS18 to 16S ribosomal RNA. The protein is Small ribosomal subunit protein bS6 of Hyphomonas neptunium (strain ATCC 15444).